A 499-amino-acid chain; its full sequence is Na(+)/H(+) antiporter NhaB (499 aa).

Helical transmembrane passes span 38 to 58, 62 to 82, 89 to 109, 128 to 148, 149 to 169, 204 to 224, 242 to 262, 310 to 330, 349 to 369, 393 to 413, 449 to 469, and 478 to 498; these read VSPF…LAMA, YPLQ…LTSA, VLAN…IYFM, LLLS…LDAL, TVTA…HRFA, LIMH…VGEP, LVMA…CAIL, VLVF…LLII, FEEA…VAVI, MFFV…VATV, ATPN…APLI, and IMAL…VILF.

This sequence belongs to the NhaB Na(+)/H(+) (TC 2.A.34) antiporter family.

The protein localises to the cell inner membrane. The enzyme catalyses 2 Na(+)(in) + 3 H(+)(out) = 2 Na(+)(out) + 3 H(+)(in). Functionally, na(+)/H(+) antiporter that extrudes sodium in exchange for external protons. This Saccharophagus degradans (strain 2-40 / ATCC 43961 / DSM 17024) protein is Na(+)/H(+) antiporter NhaB.